The following is a 317-amino-acid chain: Acetyl-coenzyme A carboxylase carboxyl transferase subunit beta (317 aa).

The disordered stretch occupies residues Met-1–Ala-28. Residues Pro-55–Gln-317 form the CoA carboxyltransferase N-terminal domain. Residues Cys-59, Cys-62, Cys-78, and Cys-81 each coordinate Zn(2+). A C4-type zinc finger spans residues Cys-59–Cys-81.

The protein belongs to the AccD/PCCB family. As to quaternary structure, acetyl-CoA carboxylase is a heterohexamer composed of biotin carboxyl carrier protein (AccB), biotin carboxylase (AccC) and two subunits each of ACCase subunit alpha (AccA) and ACCase subunit beta (AccD). Zn(2+) is required as a cofactor.

The protein localises to the cytoplasm. The enzyme catalyses N(6)-carboxybiotinyl-L-lysyl-[protein] + acetyl-CoA = N(6)-biotinyl-L-lysyl-[protein] + malonyl-CoA. Its pathway is lipid metabolism; malonyl-CoA biosynthesis; malonyl-CoA from acetyl-CoA: step 1/1. Functionally, component of the acetyl coenzyme A carboxylase (ACC) complex. Biotin carboxylase (BC) catalyzes the carboxylation of biotin on its carrier protein (BCCP) and then the CO(2) group is transferred by the transcarboxylase to acetyl-CoA to form malonyl-CoA. This is Acetyl-coenzyme A carboxylase carboxyl transferase subunit beta from Psychrobacter arcticus (strain DSM 17307 / VKM B-2377 / 273-4).